Here is a 390-residue protein sequence, read N- to C-terminus: S-adenosylmethionine synthase 1 (390 aa).

Mg(2+) is bound at residue Glu9. His15 provides a ligand contact to ATP. Glu43 serves as a coordination point for K(+). 2 residues coordinate L-methionine: Glu56 and Gln99. Residues 167-169, 235-238, Asp246, 252-253, Ala269, Lys273, and Lys277 contribute to the ATP site; these read DGK, SGRF, and RK. Asp246 is an L-methionine binding site. Lys277 contributes to the L-methionine binding site.

It belongs to the AdoMet synthase family. As to quaternary structure, homotetramer. Requires Mn(2+) as cofactor. Mg(2+) serves as cofactor. Co(2+) is required as a cofactor. The cofactor is K(+).

It localises to the cytoplasm. The enzyme catalyses L-methionine + ATP + H2O = S-adenosyl-L-methionine + phosphate + diphosphate. Its pathway is amino-acid biosynthesis; S-adenosyl-L-methionine biosynthesis; S-adenosyl-L-methionine from L-methionine: step 1/1. Catalyzes the formation of S-adenosylmethionine from methionine and ATP. The reaction comprises two steps that are both catalyzed by the same enzyme: formation of S-adenosylmethionine (AdoMet) and triphosphate, and subsequent hydrolysis of the triphosphate. This Actinidia chinensis var. chinensis (Chinese soft-hair kiwi) protein is S-adenosylmethionine synthase 1 (SAM1).